Reading from the N-terminus, the 236-residue chain is Phycocyanobilin:ferredoxin oxidoreductase (236 aa).

It belongs to the HY2 family.

It carries out the reaction (2R,3Z)-phycocyanobilin + 4 oxidized [2Fe-2S]-[ferredoxin] = biliverdin IXalpha + 4 reduced [2Fe-2S]-[ferredoxin] + 4 H(+). Its function is as follows. Catalyzes the four-electron reduction of biliverdin IX-alpha (2-electron reduction at both the A and D rings); the reaction proceeds via an isolatable 2-electron intermediate, 181,182-dihydrobiliverdin. The sequence is that of Phycocyanobilin:ferredoxin oxidoreductase (pcyA) from Thermosynechococcus vestitus (strain NIES-2133 / IAM M-273 / BP-1).